Here is a 305-residue protein sequence, read N- to C-terminus: MANSRILNDTAIDGQIEETTAWKDFLSLIKIGIVNSNLITTFTGMWLALHISGLSFLGNLNTVLLTLIGSSLIIAGSCAVNNYYDRDIDHLMERTKVRPTVTGKIQPNQALWSGILLIALGLIMLLMTTVMAAVIGFIGVFTYVVLYTMWTKRRYTINTVVGSVSGAVPPLIGWTAVEGHIGVVAWVLFMILFIWQIPHFLALAIKKTEDYRAANIPMLPVVHGFEVTKRQIIVWVACLLPLPFFLGSLGLPIVILGTLLNVGWLVLGLMGFRMKNIMKWATLMFVYSLNYMTIYFVAMVVFTLF.

The next 7 helical transmembrane spans lie at leucine 38–glycine 58, leucine 60–valine 80, isoleucine 115–isoleucine 135, isoleucine 157–valine 177, isoleucine 181–leucine 201, valine 236–leucine 256, and phenylalanine 285–phenylalanine 305.

This sequence belongs to the UbiA prenyltransferase family. Protoheme IX farnesyltransferase subfamily. Interacts with CtaA.

The protein localises to the cell membrane. It carries out the reaction heme b + (2E,6E)-farnesyl diphosphate + H2O = Fe(II)-heme o + diphosphate. Its pathway is porphyrin-containing compound metabolism; heme O biosynthesis; heme O from protoheme: step 1/1. Its function is as follows. Converts heme B (protoheme IX) to heme O by substitution of the vinyl group on carbon 2 of heme B porphyrin ring with a hydroxyethyl farnesyl side group. This Bacillus velezensis (strain DSM 23117 / BGSC 10A6 / LMG 26770 / FZB42) (Bacillus amyloliquefaciens subsp. plantarum) protein is Protoheme IX farnesyltransferase 2.